The following is a 240-amino-acid chain: (DL)-glycerol-3-phosphatase 2 (240 aa).

The Nucleophile role is filled by aspartate 20. The Mg(2+) site is built by aspartate 20, aspartate 22, and aspartate 185. Residue aspartate 22 is the Proton donor of the active site.

This sequence belongs to the HAD-like hydrolase superfamily. DOG/GPP family. Requires Mg(2+) as cofactor. As to expression, ubiquitous with highest expression in siliques. Mainly restricted to the meristem of immature flower and vascular elements of the root, shoot, leave, siliqua and developing embryo (at the protein level).

It localises to the cytoplasm. The catalysed reaction is sn-glycerol 1-phosphate + H2O = glycerol + phosphate. It carries out the reaction sn-glycerol 3-phosphate + H2O = glycerol + phosphate. Its function is as follows. Acts as a glycerol-3-phosphatase with higher stereospecificity for L-glycerol-3-phosphate than DL-glycerol-3-phosphate. The protein is (DL)-glycerol-3-phosphatase 2 (GPP2) of Arabidopsis thaliana (Mouse-ear cress).